The primary structure comprises 83 residues: Large ribosomal subunit protein bL31B (83 aa).

It belongs to the bacterial ribosomal protein bL31 family. Type B subfamily. As to quaternary structure, part of the 50S ribosomal subunit.

In terms of biological role, binds the 23S rRNA. In Lactobacillus delbrueckii subsp. bulgaricus (strain ATCC 11842 / DSM 20081 / BCRC 10696 / JCM 1002 / NBRC 13953 / NCIMB 11778 / NCTC 12712 / WDCM 00102 / Lb 14), this protein is Large ribosomal subunit protein bL31B.